The primary structure comprises 96 residues: Co-chaperonin GroES (96 aa).

The protein belongs to the GroES chaperonin family. Heptamer of 7 subunits arranged in a ring. Interacts with the chaperonin GroEL.

It localises to the cytoplasm. Its function is as follows. Together with the chaperonin GroEL, plays an essential role in assisting protein folding. The GroEL-GroES system forms a nano-cage that allows encapsulation of the non-native substrate proteins and provides a physical environment optimized to promote and accelerate protein folding. GroES binds to the apical surface of the GroEL ring, thereby capping the opening of the GroEL channel. This is Co-chaperonin GroES from Coxiella burnetii (strain Dugway 5J108-111).